The primary structure comprises 446 residues: Beta-glucosidase A (446 aa).

The active-site Proton donor is the glutamate 166. The active-site Nucleophile is the glutamate 351.

The protein belongs to the glycosyl hydrolase 1 family.

The catalysed reaction is Hydrolysis of terminal, non-reducing beta-D-glucosyl residues with release of beta-D-glucose.. The protein operates within glycan metabolism; cellulose degradation. This chain is Beta-glucosidase A (bglA), found in Thermotoga maritima (strain ATCC 43589 / DSM 3109 / JCM 10099 / NBRC 100826 / MSB8).